A 178-amino-acid polypeptide reads, in one-letter code: ATP synthase subunit delta (178 aa).

The protein belongs to the ATPase delta chain family. F-type ATPases have 2 components, F(1) - the catalytic core - and F(0) - the membrane proton channel. F(1) has five subunits: alpha(3), beta(3), gamma(1), delta(1), epsilon(1). F(0) has three main subunits: a(1), b(2) and c(10-14). The alpha and beta chains form an alternating ring which encloses part of the gamma chain. F(1) is attached to F(0) by a central stalk formed by the gamma and epsilon chains, while a peripheral stalk is formed by the delta and b chains.

It localises to the cell inner membrane. Functionally, f(1)F(0) ATP synthase produces ATP from ADP in the presence of a proton or sodium gradient. F-type ATPases consist of two structural domains, F(1) containing the extramembraneous catalytic core and F(0) containing the membrane proton channel, linked together by a central stalk and a peripheral stalk. During catalysis, ATP synthesis in the catalytic domain of F(1) is coupled via a rotary mechanism of the central stalk subunits to proton translocation. This protein is part of the stalk that links CF(0) to CF(1). It either transmits conformational changes from CF(0) to CF(1) or is implicated in proton conduction. The chain is ATP synthase subunit delta from Pseudomonas putida (strain ATCC 700007 / DSM 6899 / JCM 31910 / BCRC 17059 / LMG 24140 / F1).